The chain runs to 498 residues: TORTIFOLIA1-like protein 5 (498 aa).

5 HEAT repeats span residues 56–93 (ETFSLFINCLQSTDSSAKSPVRKHCVSLLSVLSRSHGD), 97–134 (PHLSKMVSTVLRRLRDPDSSVRAACVAASVDMTTNITG), 136–173 (PFSILFGPMIETVIHDCDPNAQISAAMCLAAAVDAADE), 177–214 (EQLQKALPKIGKLLKSEGFKAKAELLGAIGTVIGAVGG), and 219–257 (KAVLDWLLPNVSEFLSSDDWRARKAAAEAMARVAMVEEE). The interval 296-423 (EGDSTEVSES…SSSQAKSNAE (128 aa)) is disordered. Positions 300 to 322 (TEVSESSSSSKSASSGLSATSGK) are enriched in low complexity. The segment covering 343–366 (NDVEPLDRGDTPKDVEQEAVVSKE) has biased composition (basic and acidic residues). Positions 390–400 (NGSNKSQVVQS) are enriched in polar residues. S426 is subject to Phosphoserine.

The polypeptide is TORTIFOLIA1-like protein 5 (Arabidopsis thaliana (Mouse-ear cress)).